A 504-amino-acid polypeptide reads, in one-letter code: MAKIDFRNKINWRRRFRSPPRVETERDILRIFESDRGRIVNSPAIRRLQQKTQVFPLERNAAVRTRLTHSLEVQQVGRYIAKEVLSRLKEQKLLEEYGLEELTGPFESVVEMACLMHDIGNPPFGHFGEAAINDWFRQRLAPGDALGQPLTDDRCEVQALRLHEGETALNALRRKVRQDLCSFEGNAQGIRLVHTLMRMNLTWAQVGCILKYTRPAWWFEATPASHSYLMKKPGYYLAEEEYVARLRKELDLAPYNRFPLTWIMEAADDISYCVADLEDAVEKRIFSAEQLYQHLYDAWGNHEKGSLFSQVVENAWEKSRANYLRQSAEDQFFMYLRVNTLNKLVPYAARRFIDNLPAIFTGDFNHALLEDDSDCSQLLELYKNVAMKQVFSHPDVEQLELQGYRVISGLLDIYQPLLKLSLEDFSELVAQERVRRLPIASRLYQKLSTRHRLAYVEAVNKLVRTAPEFALMEYYYRCRLIQDYISGMTDLYAWDEYRRLMAVE.

Residues 66–273 (RLTHSLEVQQ…MEAADDISYC (208 aa)) form the HD domain.

It belongs to the dGTPase family. Type 1 subfamily. As to quaternary structure, homotetramer. It depends on Mg(2+) as a cofactor.

The catalysed reaction is dGTP + H2O = 2'-deoxyguanosine + triphosphate + H(+). Its function is as follows. dGTPase preferentially hydrolyzes dGTP over the other canonical NTPs. The protein is Deoxyguanosinetriphosphate triphosphohydrolase of Klebsiella pneumoniae (strain 342).